We begin with the raw amino-acid sequence, 197 residues long: 7-methyl-GTP pyrophosphatase (197 aa).

Aspartate 73 functions as the Proton acceptor in the catalytic mechanism.

It belongs to the Maf family. YceF subfamily. Requires a divalent metal cation as cofactor.

It localises to the cytoplasm. It catalyses the reaction N(7)-methyl-GTP + H2O = N(7)-methyl-GMP + diphosphate + H(+). Its function is as follows. Nucleoside triphosphate pyrophosphatase that hydrolyzes 7-methyl-GTP (m(7)GTP). May have a dual role in cell division arrest and in preventing the incorporation of modified nucleotides into cellular nucleic acids. The chain is 7-methyl-GTP pyrophosphatase from Alcanivorax borkumensis (strain ATCC 700651 / DSM 11573 / NCIMB 13689 / SK2).